Reading from the N-terminus, the 197-residue chain is FMN-dependent NADH:quinone oxidoreductase 1 (197 aa).

Residues S10, 16–18, 93–96, and 137–140 contribute to the FMN site; these read SQS, MYNF, and TRGG.

Belongs to the azoreductase type 1 family. As to quaternary structure, homodimer. FMN is required as a cofactor.

It catalyses the reaction 2 a quinone + NADH + H(+) = 2 a 1,4-benzosemiquinone + NAD(+). The catalysed reaction is N,N-dimethyl-1,4-phenylenediamine + anthranilate + 2 NAD(+) = 2-(4-dimethylaminophenyl)diazenylbenzoate + 2 NADH + 2 H(+). In terms of biological role, quinone reductase that provides resistance to thiol-specific stress caused by electrophilic quinones. Its function is as follows. Also exhibits azoreductase activity. Catalyzes the reductive cleavage of the azo bond in aromatic azo compounds to the corresponding amines. The sequence is that of FMN-dependent NADH:quinone oxidoreductase 1 from Photobacterium profundum (strain SS9).